The primary structure comprises 712 residues: Eukaryotic translation initiation factor 3 subunit B (712 aa).

Methionine 1 is modified (N-acetylmethionine). In terms of domain architecture, RRM spans asparagine 56–aspartate 143.

This sequence belongs to the eIF-3 subunit B family. In terms of assembly, component of the eukaryotic translation initiation factor 3 (eIF-3) complex, which is composed of at least 13 different subunits. Binds to the translation initiation factor TIF3H1.

Its subcellular location is the cytoplasm. In terms of biological role, RNA-binding component of the eukaryotic translation initiation factor 3 (eIF-3) complex, which is involved in protein synthesis of a specialized repertoire of mRNAs and, together with other initiation factors, stimulates binding of mRNA and methionyl-tRNAi to the 40S ribosome. The eIF-3 complex specifically targets and initiates translation of a subset of mRNAs involved in cell proliferation. This Arabidopsis thaliana (Mouse-ear cress) protein is Eukaryotic translation initiation factor 3 subunit B (TIF3B1).